The sequence spans 307 residues: Aspartate carbamoyltransferase catalytic subunit (307 aa).

Carbamoyl phosphate is bound by residues arginine 49 and threonine 50. Residue lysine 77 participates in L-aspartate binding. Arginine 99, histidine 127, and glutamine 130 together coordinate carbamoyl phosphate. Arginine 160 and arginine 211 together coordinate L-aspartate. Positions 250 and 251 each coordinate carbamoyl phosphate.

The protein belongs to the aspartate/ornithine carbamoyltransferase superfamily. ATCase family. In terms of assembly, heterododecamer (2C3:3R2) of six catalytic PyrB chains organized as two trimers (C3), and six regulatory PyrI chains organized as three dimers (R2).

It carries out the reaction carbamoyl phosphate + L-aspartate = N-carbamoyl-L-aspartate + phosphate + H(+). It participates in pyrimidine metabolism; UMP biosynthesis via de novo pathway; (S)-dihydroorotate from bicarbonate: step 2/3. Functionally, catalyzes the condensation of carbamoyl phosphate and aspartate to form carbamoyl aspartate and inorganic phosphate, the committed step in the de novo pyrimidine nucleotide biosynthesis pathway. In Bacillus pumilus (strain SAFR-032), this protein is Aspartate carbamoyltransferase catalytic subunit.